The chain runs to 337 residues: Bifunctional methylenetetrahydrofolate dehydrogenase/cyclohydrolase, mitochondrial (337 aa).

The transit peptide at 1-30 (MATALCPLRALGQTAFRPRTRRLHLSAPRA) directs the protein to the mitochondrion. Substrate is bound by residues 79 to 83 (YVLNK) and 126 to 128 (VQL). NAD(+) is bound by residues 195 to 197 (GRS) and Arg228. 304-308 (PGGVG) contacts substrate.

This sequence belongs to the tetrahydrofolate dehydrogenase/cyclohydrolase family. Mg(2+) serves as cofactor.

The protein resides in the mitochondrion. It catalyses the reaction (6R)-5,10-methylene-5,6,7,8-tetrahydrofolate + NAD(+) = (6R)-5,10-methenyltetrahydrofolate + NADH. The enzyme catalyses (6R)-5,10-methenyltetrahydrofolate + H2O = (6R)-10-formyltetrahydrofolate + H(+). In terms of biological role, although its dehydrogenase activity is NAD-specific, it can also utilize NADP at a reduced efficiency. The protein is Bifunctional methylenetetrahydrofolate dehydrogenase/cyclohydrolase, mitochondrial (MTHFD2) of Gallus gallus (Chicken).